The chain runs to 71 residues: NAD(P)H-quinone oxidoreductase subunit O (71 aa).

Belongs to the complex I NdhO subunit family. NDH-1 can be composed of about 15 different subunits; different subcomplexes with different compositions have been identified which probably have different functions.

It localises to the cellular thylakoid membrane. It catalyses the reaction a plastoquinone + NADH + (n+1) H(+)(in) = a plastoquinol + NAD(+) + n H(+)(out). It carries out the reaction a plastoquinone + NADPH + (n+1) H(+)(in) = a plastoquinol + NADP(+) + n H(+)(out). In terms of biological role, NDH-1 shuttles electrons from an unknown electron donor, via FMN and iron-sulfur (Fe-S) centers, to quinones in the respiratory and/or the photosynthetic chain. The immediate electron acceptor for the enzyme in this species is believed to be plastoquinone. Couples the redox reaction to proton translocation, and thus conserves the redox energy in a proton gradient. Cyanobacterial NDH-1 also plays a role in inorganic carbon-concentration. The chain is NAD(P)H-quinone oxidoreductase subunit O from Picosynechococcus sp. (strain ATCC 27264 / PCC 7002 / PR-6) (Agmenellum quadruplicatum).